A 360-amino-acid chain; its full sequence is Isocitrate dehydrogenase [NAD] regulatory subunit B, mitochondrial (360 aa).

The transit peptide at 1-113 directs the protein to the mitochondrion; that stretch reads MLGRLRTVVK…MELRKALDLY (113 aa). Substrate is bound by residues Ser101, Asn103, Arg107, and Arg140. Asp227 contributes to the Mg(2+) binding site. Residues 284-290 and Asn297 contribute to the NADP(+) site; that span reads HHVAADI.

Belongs to the isocitrate and isopropylmalate dehydrogenases family. In terms of assembly, heterooligomer of catalytic and regulatory subunits. It depends on Mg(2+) as a cofactor. Mn(2+) serves as cofactor.

It is found in the mitochondrion. It carries out the reaction D-threo-isocitrate + NAD(+) = 2-oxoglutarate + CO2 + NADH. In terms of biological role, performs an essential role in the oxidative function of the citric acid cycle. This chain is Isocitrate dehydrogenase [NAD] regulatory subunit B, mitochondrial (idhB), found in Dictyostelium discoideum (Social amoeba).